A 449-amino-acid chain; its full sequence is F-box/LRR-repeat protein At3g60040 (449 aa).

The F-box domain maps to 12–64 (RDAISWLPDEVLGKILSLIPTKQAVSTSLLAKKWRTIFRLVDHLELDDSFSLQ). 6 LRR repeats span residues 161–188 (LTLG…FIDT), 191–215 (FYDI…SVHH), 216–237 (HDFI…SVDY), 239–263 (CPDD…EYSH), 287–312 (ERKV…HLSP), and 340–365 (KNKR…IVKD).

This chain is F-box/LRR-repeat protein At3g60040, found in Arabidopsis thaliana (Mouse-ear cress).